A 27-amino-acid chain; its full sequence is Paragonial peptide PS-1 (27 aa).

Residues 1–17 are compositionally biased toward low complexity; sequence DVPSANANANNQRTAAA. Residues 1–27 are disordered; sequence DVPSANANANNQRTAAAKPQANAEASS.

In terms of tissue distribution, main cells of the accessory glands of males (paragonial gland).

The protein localises to the secreted. In terms of biological role, represses female sexual receptivity and stimulates oviposition. This peptide has a low activity. The polypeptide is Paragonial peptide PS-1 (PapC) (Drosophila funebris (Fruit fly)).